Here is a 107-residue protein sequence, read N- to C-terminus: Theromyzin (107 aa).

A signal peptide spans 1-21 (MHAKIILALFLGMTAFLAVQA).

In terms of tissue distribution, coelomic liquid (at protein level). Expressed in large fat cells in contact with coelomic cavities, in intestinal epithelia and at the epidermis level.

It is found in the secreted. Functionally, has bacteriostatic activity against M.luteus. No activity toward E.coli and F.oxysporum. The chain is Theromyzin from Theromyzon tessulatum (Duck leech).